Consider the following 138-residue polypeptide: Small ribosomal subunit protein uS11c (138 aa).

The protein belongs to the universal ribosomal protein uS11 family. As to quaternary structure, part of the 30S ribosomal subunit.

The protein localises to the plastid. The polypeptide is Small ribosomal subunit protein uS11c (Cuscuta gronovii (Common dodder)).